The following is a 299-amino-acid chain: Kynurenine formamidase-like hydrolase fscH (299 aa).

Residues histidine 48–tryptophan 52 carry the HGGXW motif. The tract at residues serine 90–alanine 110 is disordered. Catalysis depends on serine 142, which acts as the Nucleophile.

This sequence belongs to the kynurenine formamidase family.

It participates in secondary metabolite biosynthesis. Functionally, kynurenine formamidase-like hydrolase; part of the fragmented gene cluster that mediates the biosynthesis of fusarochromene, a tryptophan-derived metabolite closely related to a group of mycotoxins including fusarochromanone. Within the pathway, fscH converts the product of fscD into 4-hydroxykyrunenine. The first step of the pathway is the epimerization of L-tryptophan to D-tryptophan in the presence of the NRPS-like tryptophan epimerase fscC. D-tryptophan is subsequently hydroxylated by the tryptophan 6-hydroxylase fscE to yield 6-hydroxytryptophan. The pyrrole ring undergoes cleavaged by the tryptophan 2,3-dioxygenase fscD and is finally converted to 4-hydroxykyrunenine by the hydrolase fscH. The NRPS-like oxidoreductase fscA reduces the carboxyl group to primary alcohol and the DMATS-type prenyltransferase fscG performs prenylation, followed by the formation of a chromene ring catalyzed by the oxidoreductase fscI, which leads to desacetylfusarochromene. Epoxidation by fscF and rearrangement reactions of chromene double bonds convert compound desacetylfusarochromene to fusarochromanones. Although specific acetyltransferases were not found near the fsc gene cluster, several predicted enzymes containing the N-acetyltransferase superfamily domain are present in the genome of F.equiseti. These predicted enzymes may have the potential to convert desacetylfusarochromene to fusarochromene. This is Kynurenine formamidase-like hydrolase fscH from Fusarium equiseti (Fusarium scirpi).